The sequence spans 388 residues: Methylthioribose-1-phosphate isomerase (388 aa).

Residue Asp258 is the Proton donor of the active site.

It belongs to the eIF-2B alpha/beta/delta subunits family. MtnA subfamily.

It is found in the cytoplasm. The protein localises to the nucleus. The catalysed reaction is 5-(methylsulfanyl)-alpha-D-ribose 1-phosphate = 5-(methylsulfanyl)-D-ribulose 1-phosphate. The protein operates within amino-acid biosynthesis; L-methionine biosynthesis via salvage pathway; L-methionine from S-methyl-5-thio-alpha-D-ribose 1-phosphate: step 1/6. In terms of biological role, catalyzes the interconversion of methylthioribose-1-phosphate (MTR-1-P) into methylthioribulose-1-phosphate (MTRu-1-P). The sequence is that of Methylthioribose-1-phosphate isomerase (mri-1) from Neurospora crassa (strain ATCC 24698 / 74-OR23-1A / CBS 708.71 / DSM 1257 / FGSC 987).